A 214-amino-acid polypeptide reads, in one-letter code: MHVTRPKSSKGRSRPMITNSSMIYTPSQPSALSPQPPAAAKTKDKSNQSLRSRAILRRSSQPTTDILTEAYDRPPEEPVSLNRYRVLPSIEKKTSTDNQKCSQCVSRHRKCQHTNARLDVVSDSTPPEESDLLLAIRTPCGQRFKRSFRPSDQLKGVLSAAEAEFGDRFDNCIIETMDVPRRTFSNLTMTLAQCGVLNKSVLCISHDDSEMDLT.

Basic residues predominate over residues 1–13 (MHVTRPKSSKGRS). Residues 1-79 (MHVTRPKSSK…AYDRPPEEPV (79 aa)) form a disordered region. Positions 16–25 (MITNSSMIYT) are enriched in polar residues. The span at 49–60 (SLRSRAILRRSS) shows a compositional bias: low complexity. A UBX domain is found at 127 to 204 (PEESDLLLAI…GVLNKSVLCI (78 aa)).

Belongs to the UBXN10 family.

It localises to the cell projection. Its subcellular location is the cilium. Functionally, required for ciliogenesis. Acts as a tethering factor that facilitates recruitment of vcp/p97 to the intraflagellar transport complex B (IFT-B) in cilia. This Danio rerio (Zebrafish) protein is UBX domain-containing protein 10.